A 264-amino-acid chain; its full sequence is NFAT activation molecule 1 (264 aa).

A signal peptide spans 1 to 37; the sequence is MESWLLRRGARVRCLHPPSWLPAWCFLCLLPVPQTLQ. Over 38 to 159 the chain is Extracellular; it reads LTGLVSLTHT…QPPAFKVQEA (122 aa). The Ig-like V-type domain maps to 49 to 145; sequence LPIMVSLANT…QSDGVVILVR (97 aa). Cysteine 64 and cysteine 110 are joined by a disulfide. N-linked (GlcNAc...) asparagine glycans are attached at residues asparagine 105 and asparagine 118. The chain crosses the membrane as a helical span at residues 160–180; sequence LMLGFTSLMSVLGVLGTALLL. Residues 181–264 lie on the Cytoplasmic side of the membrane; it reads WKKKQISVLG…NEFNLVYENL (84 aa). The ITAM domain occupies 212–232; that stretch reads ESVYTSLQRRETEVYACMKEE. A phosphotyrosine mark is found at tyrosine 215 and tyrosine 226.

No direct interaction with the B-cell antigen receptor (BCR). Interacts with SYK; probably involved in BCR signaling. Interacts with ZAP70. N-glycosylated. As to expression, highly expressed in the spleen, expressed by both B- and CD4+ and CD8+ T-cells, as well as non-T- and non-B-cells, including macrophages and neutrophils. Expressed at low levels, if any, in non-immune tissue.

It is found in the cell membrane. Functionally, may function in immune system as a receptor which activates via the calcineurin/NFAT-signaling pathway the downstream cytokine gene promoters. Activates the transcription of IL-13 and TNF-alpha promoters. May be involved in the regulation of B-cell, but not T-cell, development. This Mus musculus (Mouse) protein is NFAT activation molecule 1 (Nfam1).